The primary structure comprises 84 residues: Acyl carrier protein (84 aa).

The region spanning 6-81 (EEILTGLAEI…DAVDYIANAT (76 aa)) is the Carrier domain. Serine 41 bears the O-(pantetheine 4'-phosphoryl)serine mark.

This sequence belongs to the acyl carrier protein (ACP) family. In terms of processing, 4'-phosphopantetheine is transferred from CoA to a specific serine of apo-ACP by AcpS. This modification is essential for activity because fatty acids are bound in thioester linkage to the sulfhydryl of the prosthetic group.

The protein resides in the cytoplasm. Its pathway is lipid metabolism; fatty acid biosynthesis. In terms of biological role, carrier of the growing fatty acid chain in fatty acid biosynthesis. This Acidothermus cellulolyticus (strain ATCC 43068 / DSM 8971 / 11B) protein is Acyl carrier protein.